We begin with the raw amino-acid sequence, 220 residues long: Protein CREG1 (220 aa).

Positions 1 to 31 are cleaved as a signal peptide; it reads MAGLSRGSARALLAALLASTLLALLVSPARG. N-linked (GlcNAc...) asparagine glycans are attached at residues Asn160, Asn193, and Asn216.

It belongs to the CREG family. Homodimer. Interacts with IGF2R; the interaction is dependent on glycosylation. In terms of processing, N-glycosylated.

Its subcellular location is the secreted. Functionally, may contribute to the transcriptional control of cell growth and differentiation. Antagonizes transcriptional activation and cellular transformation by the adenovirus E1A protein. The transcriptional control activity of cell growth requires interaction with IGF2R. The chain is Protein CREG1 (CREG1) from Homo sapiens (Human).